Reading from the N-terminus, the 306-residue chain is MEAISIFSDYQLQFFKRIGMKPKPIETLDDVSDVMKACSNVFSFENLDIVSNSCEPLNKDVLIKQVICNNQGGLCYKINTLLYHFLLEFGFKIHIIRGSVENQETHSDWNIPTGHMINIINFENRLYVVDVAFGCNLSLRPIPITDDGSEVVESCTGLYRVRKVENCVSGKYNYTHILEHRKLDSFLIESGKTWVTGYAFDPLLIVDNNNNNEKTTHQTLVQQLVIDDPTKEFSTKPLATKIVNDGSSFSIATLTANSFTLTDCKTGQKTKTNFDNDKSSFEQFNQHLISIFNLPPLKTIPPIFLN.

The active-site Acyl-thioester intermediate is the Cys75. Catalysis depends on residues His115 and Asp130.

This sequence belongs to the arylamine N-acetyltransferase family.

The enzyme catalyses an arylamine + acetyl-CoA = an N-acetylarylamine + CoA. In Dictyostelium discoideum (Social amoeba), this protein is Probable arylamine N-acetyltransferase 3.